The sequence spans 469 residues: UDP-N-acetylmuramate--L-alanine ligase (469 aa).

ATP is bound at residue 114 to 120 (GTHGKTT).

It belongs to the MurCDEF family.

The protein localises to the cytoplasm. The catalysed reaction is UDP-N-acetyl-alpha-D-muramate + L-alanine + ATP = UDP-N-acetyl-alpha-D-muramoyl-L-alanine + ADP + phosphate + H(+). It functions in the pathway cell wall biogenesis; peptidoglycan biosynthesis. Its function is as follows. Cell wall formation. The sequence is that of UDP-N-acetylmuramate--L-alanine ligase from Sinorhizobium fredii (strain NBRC 101917 / NGR234).